Consider the following 379-residue polypeptide: MSEFLPFSRPALGDAELAAVGDVLRSGWITTGPKCAQLEQAFCQLTGNRHAIAVSSATGGMHVTLMALGLGPGDEVITPSLTWVSTLNMICLLGAEPIMIDVDRDTLMVTPALIEAAITPRTRAIVPVHYAGAPADIDAIRALGERYGIPVIEDAAHAAGTAYKGRHVGAAGTAIFSFHAIKNMTCAEGGMVVTDDDALAQRIRSLKFHGLAVDAFDRTMQGRAPQAEVITPGYKYNLADINAAIALVQLEKLTQHNARRAALAQRYLHGLADTPFLPLVPPAWEHHHAWHLFIIRVDERWCGIDRDGLMQALKECGIGTGLHFRAAHTQRYYRERFPDMVLPATEWNSVRMCSLPLFPSMNDDDVERVITALRAIAKV.

Lysine 182 carries the N6-(pyridoxal phosphate)lysine modification.

It belongs to the DegT/DnrJ/EryC1 family. ArnB subfamily. Homodimer. Pyridoxal 5'-phosphate serves as cofactor.

It carries out the reaction UDP-4-amino-4-deoxy-beta-L-arabinose + 2-oxoglutarate = UDP-beta-L-threo-pentopyranos-4-ulose + L-glutamate. Its pathway is nucleotide-sugar biosynthesis; UDP-4-deoxy-4-formamido-beta-L-arabinose biosynthesis; UDP-4-deoxy-4-formamido-beta-L-arabinose from UDP-alpha-D-glucuronate: step 2/3. It functions in the pathway bacterial outer membrane biogenesis; lipopolysaccharide biosynthesis. In terms of biological role, catalyzes the conversion of UDP-4-keto-arabinose (UDP-Ara4O) to UDP-4-amino-4-deoxy-L-arabinose (UDP-L-Ara4N). The modified arabinose is attached to lipid A and is required for resistance to polymyxin and cationic antimicrobial peptides. This is UDP-4-amino-4-deoxy-L-arabinose--oxoglutarate aminotransferase from Sodalis glossinidius (strain morsitans).